The primary structure comprises 154 residues: Transcriptional repressor NrdR (154 aa).

Residues 3-34 (CPFCRHPDSRVVDSRETDEGQAIRRRRSCPEC) fold into a zinc finger. The region spanning 46 to 136 (LAVVKRSGVT…VYRSFSSAED (91 aa)) is the ATP-cone domain.

Belongs to the NrdR family. Zn(2+) is required as a cofactor.

Functionally, negatively regulates transcription of bacterial ribonucleotide reductase nrd genes and operons by binding to NrdR-boxes. The sequence is that of Transcriptional repressor NrdR from Mycolicibacterium vanbaalenii (strain DSM 7251 / JCM 13017 / BCRC 16820 / KCTC 9966 / NRRL B-24157 / PYR-1) (Mycobacterium vanbaalenii).